We begin with the raw amino-acid sequence, 132 residues long: ATP synthase epsilon chain, chloroplastic (132 aa).

This sequence belongs to the ATPase epsilon chain family. F-type ATPases have 2 components, CF(1) - the catalytic core - and CF(0) - the membrane proton channel. CF(1) has five subunits: alpha(3), beta(3), gamma(1), delta(1), epsilon(1). CF(0) has three main subunits: a, b and c.

The protein localises to the plastid. It is found in the chloroplast thylakoid membrane. Functionally, produces ATP from ADP in the presence of a proton gradient across the membrane. The chain is ATP synthase epsilon chain, chloroplastic from Adiantum capillus-veneris (Maidenhair fern).